The primary structure comprises 442 residues: Plasmalemma vesicle-associated protein (442 aa).

Topologically, residues 1–27 (MGLAMEHGGSYARAGGSSRGCWYYLRY) are cytoplasmic. The chain crosses the membrane as a helical; Signal-anchor for type II membrane protein span at residues 28-48 (FFLFVSLIQFLIILGLVLFMV). Over 49–442 (YGNVHVSTES…AGIPVAPSSG (394 aa)) the chain is Extracellular. Positions 57–77 (ESNLQATERRAEGLYSQLLGL) form a coiled coil. N-linked (GlcNAc...) asparagine glycosylation is found at Asn-83, Asn-89, Asn-113, and Asn-151. Coiled-coil stretches lie at residues 202–225 (KTRE…QALC) and 280–387 (SSKV…SALD). Disordered stretches follow at residues 301–328 (NSDL…VEKE) and 394–418 (SQPM…PASL). Over residues 319-328 (QEAKQKVEKE) the composition is skewed to basic and acidic residues.

In terms of assembly, homodimer. Expressed in lung, kidney, heart, aorta, placenta, muscle, pituitary gland, adrenals, mammary gland, bladder, lymph node, bone marrow, trachea, digestive tract, liver and tumor-associated endothelium.

It is found in the cell membrane. Its subcellular location is the membrane. The protein resides in the caveola. The protein localises to the cytoplasm. It localises to the perinuclear region. Functionally, endothelial cell-specific membrane protein involved in the formation of the diaphragms that bridge endothelial fenestrae. It is also required for the formation of stomata of caveolae and transendothelial channels. Functions in microvascular permeability, endothelial fenestrae contributing to the passage of water and solutes and regulating transcellular versus paracellular flow in different organs. Plays a specific role in embryonic development. The protein is Plasmalemma vesicle-associated protein (PLVAP) of Homo sapiens (Human).